A 239-amino-acid polypeptide reads, in one-letter code: C-8 sterol isomerase erg2 (239 aa).

Asparagine 11 carries an N-linked (GlcNAc...) asparagine glycan. Residues lysine 27–alanine 47 traverse the membrane as a helical segment. N-linked (GlcNAc...) asparagine glycosylation is present at asparagine 73.

The protein belongs to the ERG2 family.

It is found in the endoplasmic reticulum membrane. The catalysed reaction is fecosterol = episterol. The protein operates within steroid metabolism; ergosterol biosynthesis. Functionally, C-8 sterol isomerase; part of the third module of ergosterol biosynthesis pathway that includes the late steps of the pathway. Erg2 catalyzes the reaction which results in unsaturation at C-7 in the B ring of sterols and thus converts fecosterol to episterol. The third module or late pathway involves the ergosterol synthesis itself through consecutive reactions that mainly occur in the endoplasmic reticulum (ER) membrane. Firstly, the squalene synthase erg9 catalyzes the condensation of 2 farnesyl pyrophosphate moieties to form squalene, which is the precursor of all steroids. Squalene synthase is crucial for balancing the incorporation of farnesyl diphosphate (FPP) into sterol and nonsterol isoprene synthesis. Secondly, squalene is converted into lanosterol by the consecutive action of the squalene epoxidase erg1 and the lanosterol synthase erg7. Then, the delta(24)-sterol C-methyltransferase erg6 methylates lanosterol at C-24 to produce eburicol. Eburicol is the substrate of the sterol 14-alpha demethylase encoded by cyp51A and cyp51B, to yield 4,4,24-trimethyl ergosta-8,14,24(28)-trienol. The C-14 reductase erg24 then reduces the C14=C15 double bond which leads to 4,4-dimethylfecosterol. A sequence of further demethylations at C-4, involving the C-4 demethylation complex containing the C-4 methylsterol oxidases erg25A or erg25B, the sterol-4-alpha-carboxylate 3-dehydrogenase erg26 and the 3-keto-steroid reductase erg27, leads to the production of fecosterol via 4-methylfecosterol. The C-8 sterol isomerase erg2 then catalyzes the reaction which results in unsaturation at C-7 in the B ring of sterols and thus converts fecosterol to episterol. The sterol-C5-desaturase erg3B then catalyzes the introduction of a C-5 double bond in the B ring to produce 5-dehydroepisterol. The 2 other sterol-C5-desaturases, erg3A and erg3C, seem to be less important in ergosterol biosynthesis. The C-22 sterol desaturase erg5 further converts 5-dehydroepisterol into ergosta-5,7,22,24(28)-tetraen-3beta-ol by forming the C-22(23) double bond in the sterol side chain. Finally, ergosta-5,7,22,24(28)-tetraen-3beta-ol is substrate of the C-24(28) sterol reductases erg4A and erg4B to produce ergosterol. Possible alternative sterol biosynthetic pathways might exist from fecosterol to ergosterol, depending on the activities of the erg3 isoforms. The protein is C-8 sterol isomerase erg2 of Aspergillus fumigatus (strain ATCC MYA-4609 / CBS 101355 / FGSC A1100 / Af293) (Neosartorya fumigata).